The chain runs to 145 residues: Protein SprT-like (145 aa).

Positions 4–140 constitute a SprT-like domain; it reads TNYVQEVSLA…VCGNCHGKLI (137 aa). Residue H64 participates in Zn(2+) binding. The active site involves E65. H68 contributes to the Zn(2+) binding site.

Belongs to the SprT family. The cofactor is Zn(2+).

The protein resides in the cytoplasm. The sequence is that of Protein SprT-like from Streptococcus pyogenes serotype M6 (strain ATCC BAA-946 / MGAS10394).